A 510-amino-acid chain; its full sequence is Probable inositol 3-phosphate synthase isozyme 3 (510 aa).

The protein belongs to the myo-inositol 1-phosphate synthase family. The cofactor is NAD(+). Expressed in siliques, leaves, roots, seed endosperm, but not in embryos. Highest expression in roots. Confined to vascular tissue and hydathodes of leaves.

The protein localises to the cytoplasm. The catalysed reaction is D-glucose 6-phosphate = 1D-myo-inositol 3-phosphate. Its pathway is polyol metabolism; myo-inositol biosynthesis; myo-inositol from D-glucose 6-phosphate: step 1/2. Functionally, key enzyme in myo-inositol biosynthesis pathway that catalyzes the conversion of glucose 6-phosphate to 1-myo-inositol 1-phosphate in a NAD-dependent manner. This chain is Probable inositol 3-phosphate synthase isozyme 3 (IPS3), found in Arabidopsis thaliana (Mouse-ear cress).